Consider the following 388-residue polypeptide: UDP-4-amino-4-deoxy-L-arabinose--oxoglutarate aminotransferase (388 aa).

N6-(pyridoxal phosphate)lysine is present on Lys183.

It belongs to the DegT/DnrJ/EryC1 family. ArnB subfamily. Homodimer. Pyridoxal 5'-phosphate is required as a cofactor.

The enzyme catalyses UDP-4-amino-4-deoxy-beta-L-arabinose + 2-oxoglutarate = UDP-beta-L-threo-pentopyranos-4-ulose + L-glutamate. It functions in the pathway nucleotide-sugar biosynthesis; UDP-4-deoxy-4-formamido-beta-L-arabinose biosynthesis; UDP-4-deoxy-4-formamido-beta-L-arabinose from UDP-alpha-D-glucuronate: step 2/3. Its pathway is bacterial outer membrane biogenesis; lipopolysaccharide biosynthesis. Functionally, catalyzes the conversion of UDP-4-keto-arabinose (UDP-Ara4O) to UDP-4-amino-4-deoxy-L-arabinose (UDP-L-Ara4N). The modified arabinose is attached to lipid A and is required for resistance to polymyxin and cationic antimicrobial peptides. This is UDP-4-amino-4-deoxy-L-arabinose--oxoglutarate aminotransferase from Shewanella sediminis (strain HAW-EB3).